Reading from the N-terminus, the 335-residue chain is Nicotinate-nucleotide--dimethylbenzimidazole phosphoribosyltransferase (335 aa).

Glu-304 serves as the catalytic Proton acceptor.

This sequence belongs to the CobT family.

It catalyses the reaction 5,6-dimethylbenzimidazole + nicotinate beta-D-ribonucleotide = alpha-ribazole 5'-phosphate + nicotinate + H(+). The protein operates within nucleoside biosynthesis; alpha-ribazole biosynthesis; alpha-ribazole from 5,6-dimethylbenzimidazole: step 1/2. In terms of biological role, catalyzes the synthesis of alpha-ribazole-5'-phosphate from nicotinate mononucleotide (NAMN) and 5,6-dimethylbenzimidazole (DMB). In Thermus thermophilus (strain ATCC 27634 / DSM 579 / HB8), this protein is Nicotinate-nucleotide--dimethylbenzimidazole phosphoribosyltransferase.